Consider the following 256-residue polypeptide: MSLAVRVIPCLDVDAGRVVKGVHFENLKDAGDPVELAAEYYRQRADEITFLDVTASSSHRNTMIDVVSRTAEQVFIPMTVGGGVRTPEDVDSLLRCGADKVGVNTAAINDPSLISRVADRFGNQVLVLSVDARREKGEQHTQSGFEVTTMGGRKSTGIDAIWWVKRAEQLGAGEILLNSMDADGTKEGFDLEMIRAVRKEVKIPIIASGGAGKVEDFPPAIEAGADAVLAASVFHYGILTIADVKAELKKHGYTVR.

Residues Asp12 and Asp131 contribute to the active site.

Belongs to the HisA/HisF family. In terms of assembly, heterodimer of HisH and HisF.

The protein localises to the cytoplasm. The enzyme catalyses 5-[(5-phospho-1-deoxy-D-ribulos-1-ylimino)methylamino]-1-(5-phospho-beta-D-ribosyl)imidazole-4-carboxamide + L-glutamine = D-erythro-1-(imidazol-4-yl)glycerol 3-phosphate + 5-amino-1-(5-phospho-beta-D-ribosyl)imidazole-4-carboxamide + L-glutamate + H(+). Its pathway is amino-acid biosynthesis; L-histidine biosynthesis; L-histidine from 5-phospho-alpha-D-ribose 1-diphosphate: step 5/9. In terms of biological role, IGPS catalyzes the conversion of PRFAR and glutamine to IGP, AICAR and glutamate. The HisF subunit catalyzes the cyclization activity that produces IGP and AICAR from PRFAR using the ammonia provided by the HisH subunit. This chain is Imidazole glycerol phosphate synthase subunit HisF, found in Bifidobacterium longum (strain NCC 2705).